Here is a 168-residue protein sequence, read N- to C-terminus: MKILEKETSIIRVGIADVKIVRTPDKIRTSGLGSCVGLVLYDLEAKTAGLVHVMLPDSSLSKTPDINVAKYADTAVEATVKMLLEAGCRKYALKAKMAGGAEMFKFKMTNDLMKVGPRNVLAIKKHLSLLNIPIVSEDTGGNSGRTIEFDPQSAELVIRTVKQGVTTI.

Belongs to the CheD family. Forms a complex with CheC.

It catalyses the reaction L-glutaminyl-[protein] + H2O = L-glutamyl-[protein] + NH4(+). In terms of biological role, deamidates glutamine residues to glutamate on methyl-accepting chemotaxis receptors (MCPs). CheD-mediated MCP deamidation is required for productive communication of the conformational signals of the chemoreceptors to the CheA kinase. The sequence is that of Chemoreceptor glutamine deamidase CheD from Bacillus licheniformis (strain ATCC 14580 / DSM 13 / JCM 2505 / CCUG 7422 / NBRC 12200 / NCIMB 9375 / NCTC 10341 / NRRL NRS-1264 / Gibson 46).